The sequence spans 98 residues: NADH-ubiquinone oxidoreductase chain 4L (98 aa).

3 helical membrane passes run 1 to 21 (MIPT…GMLT), 29 to 49 (SLLC…LIAL), and 61 to 81 (IILL…LVSI).

It belongs to the complex I subunit 4L family. In terms of assembly, core subunit of respiratory chain NADH dehydrogenase (Complex I) which is composed of 45 different subunits.

It localises to the mitochondrion inner membrane. It catalyses the reaction a ubiquinone + NADH + 5 H(+)(in) = a ubiquinol + NAD(+) + 4 H(+)(out). Functionally, core subunit of the mitochondrial membrane respiratory chain NADH dehydrogenase (Complex I) which catalyzes electron transfer from NADH through the respiratory chain, using ubiquinone as an electron acceptor. Part of the enzyme membrane arm which is embedded in the lipid bilayer and involved in proton translocation. In Macaca ochreata subsp. brunnescens (Muna-buton macaque), this protein is NADH-ubiquinone oxidoreductase chain 4L (MT-ND4L).